The primary structure comprises 508 residues: Lysine--tRNA ligase (508 aa).

Positions 418 and 425 each coordinate Mg(2+).

This sequence belongs to the class-II aminoacyl-tRNA synthetase family. Homodimer. It depends on Mg(2+) as a cofactor.

The protein localises to the cytoplasm. It catalyses the reaction tRNA(Lys) + L-lysine + ATP = L-lysyl-tRNA(Lys) + AMP + diphosphate. In Burkholderia ambifaria (strain MC40-6), this protein is Lysine--tRNA ligase.